We begin with the raw amino-acid sequence, 210 residues long: Pyridoxine/pyridoxamine 5'-phosphate oxidase (210 aa).

Substrate is bound by residues 7 to 10 and K65; that span reads RDEY. FMN is bound by residues 60–65, 75–76, R81, K82, and Q104; these read RMVLLK and FT. Residues Y122, R126, and S130 each contribute to the substrate site. FMN contacts are provided by residues 139 to 140 and W183; that span reads QS. 189 to 191 provides a ligand contact to substrate; it reads RLH. R193 serves as a coordination point for FMN.

It belongs to the pyridoxamine 5'-phosphate oxidase family. Homodimer. It depends on FMN as a cofactor.

It catalyses the reaction pyridoxamine 5'-phosphate + O2 + H2O = pyridoxal 5'-phosphate + H2O2 + NH4(+). The catalysed reaction is pyridoxine 5'-phosphate + O2 = pyridoxal 5'-phosphate + H2O2. The protein operates within cofactor metabolism; pyridoxal 5'-phosphate salvage; pyridoxal 5'-phosphate from pyridoxamine 5'-phosphate: step 1/1. It functions in the pathway cofactor metabolism; pyridoxal 5'-phosphate salvage; pyridoxal 5'-phosphate from pyridoxine 5'-phosphate: step 1/1. Catalyzes the oxidation of either pyridoxine 5'-phosphate (PNP) or pyridoxamine 5'-phosphate (PMP) into pyridoxal 5'-phosphate (PLP). The sequence is that of Pyridoxine/pyridoxamine 5'-phosphate oxidase from Haemophilus influenzae (strain ATCC 51907 / DSM 11121 / KW20 / Rd).